The primary structure comprises 164 residues: Rhomboid-related protein 1 (164 aa).

Helical transmembrane passes span glycine 10–leucine 30, isoleucine 32–methionine 52, valine 56–methionine 76, and proline 120–leucine 140. Serine 60 functions as the Nucleophile in the catalytic mechanism. The active site involves histidine 125.

It belongs to the peptidase S54 family.

The protein resides in the membrane. The enzyme catalyses Cleaves type-1 transmembrane domains using a catalytic dyad composed of serine and histidine that are contributed by different transmembrane domains.. Functionally, may be involved in regulated intramembrane proteolysis and the subsequent release of functional polypeptides from their membrane anchors. This is Rhomboid-related protein 1 (Rhbdl1) from Rattus norvegicus (Rat).